Reading from the N-terminus, the 201-residue chain is MNKLLVSLLLTLGLTGLAHAAGDAAAGQAKAAVCGACHGADGNSPAPNFPKLAGQGERYLLKQMHDIKDGKRTVLEMTGLLTNLSDQDLADIAAYFASQKMSVGMADPNLVAQGEALFRGGKIAEGMPACTGCHSPSGVGIATAGFPHLGGQHATYVAKQLTDFREGTRTNDGDTKIMQSIAAKLSNKDIAAISSYIQGLH.

Positions 1–20 (MNKLLVSLLLTLGLTGLAHA) are cleaved as a signal peptide. 8 residues coordinate heme c: cysteine 34, cysteine 37, histidine 38, methionine 77, cysteine 130, cysteine 133, histidine 134, and methionine 178.

Post-translationally, binds 2 heme c groups covalently per subunit.

The protein resides in the periplasm. In terms of biological role, diheme, high potential cytochrome c believed to be an intermediate electron donor to terminal oxidation systems. This is Cytochrome c4 (cc4) from Pseudomonas aeruginosa (strain ATCC 15692 / DSM 22644 / CIP 104116 / JCM 14847 / LMG 12228 / 1C / PRS 101 / PAO1).